The sequence spans 463 residues: Fumarate hydratase class II (463 aa).

Substrate-binding positions include 95 to 97 (SGT), 126 to 129 (HPND), 136 to 138 (SSN), and Thr184. The active-site Proton donor/acceptor is the His185. Ser315 is an active-site residue. Residues Ser316 and 321 to 323 (KIN) contribute to the substrate site.

It belongs to the class-II fumarase/aspartase family. Fumarase subfamily. As to quaternary structure, homotetramer.

The protein resides in the cytoplasm. The enzyme catalyses (S)-malate = fumarate + H2O. The protein operates within carbohydrate metabolism; tricarboxylic acid cycle; (S)-malate from fumarate: step 1/1. Involved in the TCA cycle. Catalyzes the stereospecific interconversion of fumarate to L-malate. This chain is Fumarate hydratase class II, found in Chlamydia trachomatis serovar D (strain ATCC VR-885 / DSM 19411 / UW-3/Cx).